A 200-amino-acid chain; its full sequence is HTH-type transcriptional regulator BetI (200 aa).

In terms of domain architecture, HTH tetR-type spans 8–68 (DIRKPQLVQA…ETMREILRQL (61 aa)). The H-T-H motif DNA-binding region spans 31 to 50 (SIALISKEAGVSTGIINHYF).

Its pathway is amine and polyamine biosynthesis; betaine biosynthesis via choline pathway [regulation]. Functionally, repressor involved in the biosynthesis of the osmoprotectant glycine betaine. It represses transcription of the choline transporter BetT and the genes of BetAB involved in the synthesis of glycine betaine. The polypeptide is HTH-type transcriptional regulator BetI (Vibrio atlanticus (strain LGP32) (Vibrio splendidus (strain Mel32))).